Consider the following 366-residue polypeptide: Holliday junction branch migration complex subunit RuvB (366 aa).

Residues 1-49 (MAIISSKKQPPEPNGQPNKRPESAPAAPKEKVLQPEAAIDEQGKQEESI) form a disordered region. The large ATPase domain (RuvB-L) stretch occupies residues 13-210 (PNGQPNKRPE…FGLIQKLRFY (198 aa)). ATP contacts are provided by residues I49, R50, G91, K94, T95, T96, 157–159 (EDY), R200, Y210, and R247. Position 95 (T95) interacts with Mg(2+). The segment at 211-281 (EVDELSQIVL…IAAEALQLFQ (71 aa)) is small ATPAse domain (RuvB-S). A head domain (RuvB-H) region spans residues 284-366 (PCGLDWTDRR…TPPNEQLSLL (83 aa)). DNA-binding residues include R339 and R344.

It belongs to the RuvB family. As to quaternary structure, homohexamer. Forms an RuvA(8)-RuvB(12)-Holliday junction (HJ) complex. HJ DNA is sandwiched between 2 RuvA tetramers; dsDNA enters through RuvA and exits via RuvB. An RuvB hexamer assembles on each DNA strand where it exits the tetramer. Each RuvB hexamer is contacted by two RuvA subunits (via domain III) on 2 adjacent RuvB subunits; this complex drives branch migration. In the full resolvosome a probable DNA-RuvA(4)-RuvB(12)-RuvC(2) complex forms which resolves the HJ.

It localises to the cytoplasm. It catalyses the reaction ATP + H2O = ADP + phosphate + H(+). In terms of biological role, the RuvA-RuvB-RuvC complex processes Holliday junction (HJ) DNA during genetic recombination and DNA repair, while the RuvA-RuvB complex plays an important role in the rescue of blocked DNA replication forks via replication fork reversal (RFR). RuvA specifically binds to HJ cruciform DNA, conferring on it an open structure. The RuvB hexamer acts as an ATP-dependent pump, pulling dsDNA into and through the RuvAB complex. RuvB forms 2 homohexamers on either side of HJ DNA bound by 1 or 2 RuvA tetramers; 4 subunits per hexamer contact DNA at a time. Coordinated motions by a converter formed by DNA-disengaged RuvB subunits stimulates ATP hydrolysis and nucleotide exchange. Immobilization of the converter enables RuvB to convert the ATP-contained energy into a lever motion, pulling 2 nucleotides of DNA out of the RuvA tetramer per ATP hydrolyzed, thus driving DNA branch migration. The RuvB motors rotate together with the DNA substrate, which together with the progressing nucleotide cycle form the mechanistic basis for DNA recombination by continuous HJ branch migration. Branch migration allows RuvC to scan DNA until it finds its consensus sequence, where it cleaves and resolves cruciform DNA. The sequence is that of Holliday junction branch migration complex subunit RuvB from Trichormus variabilis (strain ATCC 29413 / PCC 7937) (Anabaena variabilis).